We begin with the raw amino-acid sequence, 1757 residues long: Serine/threonine-protein kinase WNK3 (1757 aa).

Positions 1–25 (MATDSGEPASTEDSEKPDGVSFENR) are disordered. The residue at position 62 (Ser-62) is a Phosphoserine. A compositionally biased stretch (basic and acidic residues) spans 66-82 (TEDDKVAESSRRDERKA). The segment at 66–85 (TEDDKVAESSRRDERKAATN) is disordered. The Protein kinase domain occupies 146–404 (LKFDIELGRG…IKDLLNHAFF (259 aa)). Residues 226-229 (TELM) and Lys-276 contribute to the ATP site. Residue Asp-293 is the Proton acceptor of the active site. A phosphoserine; by autocatalysis mark is found at Ser-303 and Ser-307. An interaction with KLHL3 region spans residues 536–546 (EYEETEVDQHV). Thr-540 carries the phosphothreonine modification. Polar residues-rich tracts occupy residues 551-570 (LQGKPQQQSSSVRGDTSSEP), 578-604 (SDTSSHPTVAYSSNQTTSSQEQPKLTQ), and 674-689 (SVKENTNNPDTPSGNG). Disordered stretches follow at residues 551 to 604 (LQGK…KLTQ) and 674 to 705 (SVKENTNNPDTPSGNGKQDRNKQRRASCPRPE). Ser-1039 is modified (phosphoserine). Polar residues predominate over residues 1404–1422 (VATEKNVTSTTEVSVQSGS). Disordered stretches follow at residues 1404-1440 (VATEKNVTSTTEVSVQSGSEPLDKEKNESTPGKQTCT), 1479-1498 (SLFYSPSSPMSSDNESEIED), and 1536-1574 (ATKDNKAQSSEVPLSPASPRRPRSFKSKLRSRPQSMTHS). The segment covering 1479–1491 (SLFYSPSSPMSSD) has biased composition (low complexity). A phosphoserine mark is found at Ser-1550 and Ser-1553. Residues 1555 to 1566 (RRPRSFKSKLRS) are compositionally biased toward basic residues. Ser-1595 carries the post-translational modification Phosphoserine. 2 disordered regions span residues 1621 to 1650 (HFPSKPSLNQLKQSQQKSEAENWNKSCEST) and 1734 to 1757 (PGMNLQSFPAPPVQNPASIPPGPK). The segment covering 1624 to 1637 (SKPSLNQLKQSQQK) has biased composition (low complexity). Polar residues predominate over residues 1641–1650 (ENWNKSCEST). Over residues 1742–1757 (PAPPVQNPASIPPGPK) the composition is skewed to pro residues.

Belongs to the protein kinase superfamily. Ser/Thr protein kinase family. WNK subfamily. Interacts with WNK1 and WNK4. The cofactor is Mg(2+). Post-translationally, autophosphorylated at Ser-303 and Ser-307, promoting its activity. Phosphorylation at Thr-540 prevents interaction with KLHL3 and subsequent ubiquitination and degradation by the BCR(KLHL3) complex. In terms of processing, ubiquitinated by the BCR(KLHL2) complex, leading to its degradation. Ubiquitinated by the BCR(KLHL3) complex, leading to its degradation. In terms of tissue distribution, expressed in pancreatic duct.

The protein resides in the cytoplasm. It carries out the reaction L-seryl-[protein] + ATP = O-phospho-L-seryl-[protein] + ADP + H(+). The enzyme catalyses L-threonyl-[protein] + ATP = O-phospho-L-threonyl-[protein] + ADP + H(+). Activated in response to hyperosmotic stress: cell shrinkage promotes formation of a membraneless compartment that concentrates WNK3 with its substrates, OXSR1/OSR1 and STK39/SPAK. Activation requires autophosphorylation of Ser-307 and, to a lower extent, Ser-303. Autophosphorylation and subsequent activation is inhibited by increases in intracellular ionic strength: Cl(-) potently inhibits WNK3 kinase activity via direct binding. Also inhibited by K(+) ions. Kinase activity is inhibited by WNK4. Functionally, serine/threonine-protein kinase component of the WNK3-SPAK/OSR1 kinase cascade, which plays an important role in the regulation of electrolyte homeostasis and regulatory volume increase in response to hyperosmotic stress. WNK3 mediates regulatory volume increase in response to hyperosmotic stress by acting as a molecular crowding sensor, which senses cell shrinkage and mediates formation of a membraneless compartment by undergoing liquid-liquid phase separation. The membraneless compartment concentrates WNK3 with its substrates, OXSR1/OSR1 and STK39/SPAK, promoting WNK3-dependent phosphorylation and activation of downstream kinases OXSR1/OSR1 and STK39/SPAK. Following activation, OXSR1/OSR1 and STK39/SPAK catalyze phosphorylation of ion cotransporters SLC12A1/NKCC2, SLC12A2/NKCC1, SLC12A3/NCC, SLC12A4/KCC1, SLC12A5/KCC2 or SLC12A6/KCC3, regulating their activity. Phosphorylation of Na-K-Cl cotransporters SLC12A2/NKCC1 and SLC12A2/NKCC1 promote their activation and ion influx; simultaneously, phosphorylation of K-Cl cotransporters SLC12A4/KCC1, SLC12A5/KCC2 and SLC12A6/KCC3 inhibits its activity, blocking ion efflux. Phosphorylates WNK4, possibly regulating the activity of SLC12A3/NCC. May also phosphorylate NEDD4L. Also acts as a scaffold protein independently of its protein kinase activity: negatively regulates cell membrane localization of various transporters and channels, such as KCNJ1 and SLC26A9. Increases Ca(2+) influx mediated by TRPV5 and TRPV6 by enhancing their membrane expression level via a kinase-dependent pathway. This is Serine/threonine-protein kinase WNK3 from Mus musculus (Mouse).